We begin with the raw amino-acid sequence, 1708 residues long: Clathrin heavy chain 1 (1708 aa).

Residues 1 to 492 are globular terminal domain; sequence MAAANAPIAM…VDNDLALKIY (492 aa). WD40-like repeat stretches follow at residues 25 to 67, 68 to 113, 114 to 155, 156 to 205, 206 to 270, 271 to 314, and 315 to 343; these read FVTF…RPIT, ADSA…MPEQ, VVFW…ANLA, NNQI…QALE, AHAA…PDFQ, DDFP…ISPD, and PIFLTAESSASGGFYAINRRGQVLHATVN. Residues 462-478 are binding site for the uncoating ATPase, involved in lattice disassembly; it reads ENWLAEDKLECSEELGD. A flexible linker region spans residues 493–536; the sequence is IKARATPKVVAAFAERREFDKILIYSKQVGYTPDYLFLLQTILR. The tract at residues 537 to 648 is distal segment; it reads TDPQGAVNFA…RALQHYTELP (112 aa). A heavy chain arm region spans residues 537 to 1708; the sequence is TDPQGAVNFA…AYGMPPMGSY (1172 aa). CHCR repeat units follow at residues 551–697, 700–842, 847–986, 993–1138, 1142–1283, 1288–1434, and 1437–1580; these read QMEG…QIVV, AKEY…PEDF, ILSV…QLID, LPES…VSEA, FIRA…FRLA, LNII…DLIN, and LNVL…KECF. Positions 653–1708 are proximal segment; that stretch reads VMVNTHAIEP…AYGMPPMGSY (1056 aa). The tract at residues 1227 to 1536 is involved in binding clathrin light chain; the sequence is AAKIIYAFIS…YIYKKAGRWK (310 aa). The trimerization stretch occupies residues 1564 to 1708; sequence SEDLLVYFIE…AYGMPPMGSY (145 aa).

It belongs to the clathrin heavy chain family. As to quaternary structure, clathrin triskelions, composed of 3 heavy chains and 3 light chains, are the basic subunits of the clathrin coat.

It localises to the cytoplasmic vesicle membrane. Its subcellular location is the membrane. The protein resides in the coated pit. Clathrin is the major protein of the polyhedral coat of coated pits and vesicles. The polypeptide is Clathrin heavy chain 1 (Oryza sativa subsp. japonica (Rice)).